Consider the following 573-residue polypeptide: Membrane protein insertase YidC (573 aa).

The next 6 helical transmembrane spans lie at 6–26 (VFLI…WGKD), 355–375 (FSIM…LHSF), 379–399 (WGWA…PLSA), 446–466 (GGCL…WVLV), 488–508 (PYFI…KLTP), and 524–544 (PLVF…YWVV).

Belongs to the OXA1/ALB3/YidC family. Type 1 subfamily. Interacts with the Sec translocase complex via SecD. Specifically interacts with transmembrane segments of nascent integral membrane proteins during membrane integration.

It is found in the cell inner membrane. In terms of biological role, required for the insertion and/or proper folding and/or complex formation of integral membrane proteins into the membrane. Involved in integration of membrane proteins that insert both dependently and independently of the Sec translocase complex, as well as at least some lipoproteins. Aids folding of multispanning membrane proteins. The chain is Membrane protein insertase YidC from Xanthomonas campestris pv. campestris (strain ATCC 33913 / DSM 3586 / NCPPB 528 / LMG 568 / P 25).